The chain runs to 945 residues: Isoleucine--tRNA ligase 1 (945 aa).

A 'HIGH' region motif is present at residues 66–76 (PYANGDIHLGH). Glu-581 lines the L-isoleucyl-5'-AMP pocket. Residues 622 to 626 (KMSKS) carry the 'KMSKS' region motif. Lys-625 provides a ligand contact to ATP. Residues Cys-908, Cys-911, Cys-928, and Cys-931 each coordinate Zn(2+).

The protein belongs to the class-I aminoacyl-tRNA synthetase family. IleS type 1 subfamily. In terms of assembly, monomer. The cofactor is Zn(2+).

It is found in the cytoplasm. The enzyme catalyses tRNA(Ile) + L-isoleucine + ATP = L-isoleucyl-tRNA(Ile) + AMP + diphosphate. Functionally, catalyzes the attachment of isoleucine to tRNA(Ile). As IleRS can inadvertently accommodate and process structurally similar amino acids such as valine, to avoid such errors it has two additional distinct tRNA(Ile)-dependent editing activities. One activity is designated as 'pretransfer' editing and involves the hydrolysis of activated Val-AMP. The other activity is designated 'posttransfer' editing and involves deacylation of mischarged Val-tRNA(Ile). The sequence is that of Isoleucine--tRNA ligase 1 from Burkholderia mallei (strain ATCC 23344).